A 499-amino-acid chain; its full sequence is Lysine--tRNA ligase (499 aa).

The Mg(2+) site is built by glutamate 408 and glutamate 415.

It belongs to the class-II aminoacyl-tRNA synthetase family. Homodimer. Requires Mg(2+) as cofactor.

The protein localises to the cytoplasm. It carries out the reaction tRNA(Lys) + L-lysine + ATP = L-lysyl-tRNA(Lys) + AMP + diphosphate. This is Lysine--tRNA ligase from Bacillus cytotoxicus (strain DSM 22905 / CIP 110041 / 391-98 / NVH 391-98).